The sequence spans 601 residues: Glutathione-regulated potassium-efflux system protein KefB (601 aa).

A run of 13 helical transmembrane segments spans residues serine 4–alanine 24, isoleucine 29–phenylalanine 49, glutamate 55–leucine 75, isoleucine 87–methionine 107, alanine 115–methionine 135, valine 152–glycine 172, histidine 177–glycine 197, phenylalanine 207–glycine 227, leucine 230–leucine 250, alanine 262–leucine 282, leucine 284–valine 304, methionine 324–alanine 344, and serine 356–valine 376. Residues lysine 400–threonine 519 enclose the RCK N-terminal domain.

It belongs to the monovalent cation:proton antiporter 2 (CPA2) transporter (TC 2.A.37) family. KefB subfamily. Interacts with the regulatory subunit KefG.

The protein resides in the cell inner membrane. Functionally, pore-forming subunit of a potassium efflux system that confers protection against electrophiles. Catalyzes K(+)/H(+) antiport. The sequence is that of Glutathione-regulated potassium-efflux system protein KefB from Citrobacter koseri (strain ATCC BAA-895 / CDC 4225-83 / SGSC4696).